Here is a 105-residue protein sequence, read N- to C-terminus: Thioredoxin (105 aa).

Residues V2–V105 form the Thioredoxin domain. K3 is subject to N6-acetyllysine. Residue K8 is modified to N6-succinyllysine. Active-site nucleophile residues include C32 and C35. C32 and C35 are disulfide-bonded. Residue K39 is modified to N6-acetyllysine. C62 and C69 each carry S-nitrosocysteine. The residue at position 73 (C73) is an S-nitrosocysteine; alternate. Position 94 is an N6-acetyllysine; alternate (K94). Position 94 is an N6-succinyllysine; alternate (K94).

This sequence belongs to the thioredoxin family. Homodimer; disulfide-linked. Interacts with TXNIP through the redox-active site. Interacts with MAP3K5 and CASP3. In case of infection, interacts with S.typhimurium protein slrP. Interacts with APEX1; the interaction stimulates the FOS/JUN AP-1 DNA-binding activity in a redox-dependent manner. In terms of processing, in the fully reduced protein, both Cys-69 and Cys-73 are nitrosylated in response to nitric oxide (NO). When two disulfide bonds are present in the protein, only Cys-73 is nitrosylated. Cys-73 can serve as donor for nitrosylation of target proteins. In case of infection, ubiquitinated by S.typhimurium protein slrP, leading to its degradation.

Its subcellular location is the nucleus. The protein resides in the cytoplasm. It is found in the secreted. Participates in various redox reactions through the reversible oxidation of its active center dithiol to a disulfide and catalyzes dithiol-disulfide exchange reactions. Plays a role in the reversible S-nitrosylation of cysteine residues in target proteins, and thereby contributes to the response to intracellular nitric oxide. Nitrosylates the active site Cys of CASP3 in response to nitric oxide (NO), and thereby inhibits caspase-3 activity. Induces the FOS/JUN AP-1 DNA-binding activity in ionizing radiation (IR) cells through its oxidation/reduction status and stimulates AP-1 transcriptional activity. Functionally, ADF augments the expression of the interleukin-2 receptor TAC (IL2R/P55). In Homo sapiens (Human), this protein is Thioredoxin (TXN).